A 205-amino-acid chain; its full sequence is Large ribosomal subunit protein uL4 (205 aa).

The interval 47 to 70 is disordered; that stretch reads TRAQKSRAEVSGGGKKPFRQKGTG.

This sequence belongs to the universal ribosomal protein uL4 family. Part of the 50S ribosomal subunit.

Its function is as follows. One of the primary rRNA binding proteins, this protein initially binds near the 5'-end of the 23S rRNA. It is important during the early stages of 50S assembly. It makes multiple contacts with different domains of the 23S rRNA in the assembled 50S subunit and ribosome. Forms part of the polypeptide exit tunnel. This is Large ribosomal subunit protein uL4 from Acinetobacter baylyi (strain ATCC 33305 / BD413 / ADP1).